The primary structure comprises 59 residues: uncharacterized protein (59 aa).

This is an uncharacterized protein from Acidianus convivator (ATV).